Reading from the N-terminus, the 396-residue chain is MPIANPAATAPYATRAEETRGRLFQEPESATRTAFQRDRDRIIHSGAFRRLKYKTQVFVYHEGDNYRTRLSHSLEVSQIARSVARVFGLDEDLSETLALAHDLGHTPFGHAGETALDSCMRDFGGFDHNAQTLRIVTKLEHRYARFDGLNLTWETLEGLVKHNGPVVTPGRSIADLPRAIAEYAETQDLELATYAGPEAQVAALADDIAYNNHDIDDGLRAGLFDIEDLMALPLVGDVFQRVMDRYPGLETTRVIHEAVRELIGTMIEDLLSETRSRLAEARPRSAADVRAMSRPLVGFTAEMTEHNAALKAFLFERMYRHYRVNRSMSKAQRIVRDLFSLLHGEPDQLAPEWQAGCDGPGGIKTARRVCDFIAGMTDKFAIEEHARLFDLHDPRA.

In terms of domain architecture, HD spans 69 to 211; the sequence is RLSHSLEVSQ…AALADDIAYN (143 aa).

This sequence belongs to the dGTPase family. Type 2 subfamily.

The sequence is that of Deoxyguanosinetriphosphate triphosphohydrolase-like protein from Parvibaculum lavamentivorans (strain DS-1 / DSM 13023 / NCIMB 13966).